The sequence spans 171 residues: 3-hydroxydecanoyl-[acyl-carrier-protein] dehydratase (171 aa).

His70 is a catalytic residue.

The protein belongs to the thioester dehydratase family. FabA subfamily. In terms of assembly, homodimer.

Its subcellular location is the cytoplasm. It carries out the reaction a (3R)-hydroxyacyl-[ACP] = a (2E)-enoyl-[ACP] + H2O. It catalyses the reaction (3R)-hydroxydecanoyl-[ACP] = (2E)-decenoyl-[ACP] + H2O. The catalysed reaction is (2E)-decenoyl-[ACP] = (3Z)-decenoyl-[ACP]. Its pathway is lipid metabolism; fatty acid biosynthesis. Necessary for the introduction of cis unsaturation into fatty acids. Catalyzes the dehydration of (3R)-3-hydroxydecanoyl-ACP to E-(2)-decenoyl-ACP and then its isomerization to Z-(3)-decenoyl-ACP. Can catalyze the dehydratase reaction for beta-hydroxyacyl-ACPs with saturated chain lengths up to 16:0, being most active on intermediate chain length. The sequence is that of 3-hydroxydecanoyl-[acyl-carrier-protein] dehydratase from Marinomonas sp. (strain MWYL1).